Reading from the N-terminus, the 81-residue chain is Small ribosomal subunit protein bS16 (81 aa).

The protein belongs to the bacterial ribosomal protein bS16 family.

This is Small ribosomal subunit protein bS16 from Teredinibacter turnerae (strain ATCC 39867 / T7901).